A 298-amino-acid chain; its full sequence is Cyclin-dependent kinase 2 homolog (298 aa).

Residues 4 to 284 form the Protein kinase domain; sequence YHKMEKIGEG…AKEALKHDYF (281 aa). Residues 10–18 and lysine 32 each bind ATP; that span reads IGEGTYGVV. Threonine 14 bears the Phosphothreonine mark. Residue tyrosine 15 is modified to Phosphotyrosine. Aspartate 125 functions as the Proton acceptor in the catalytic mechanism. Phosphothreonine is present on threonine 158.

This sequence belongs to the protein kinase superfamily. CMGC Ser/Thr protein kinase family. CDC2/CDKX subfamily. In terms of assembly, may form a complex composed of at least the catalytic subunit CRK2 and a cyclin. Mg(2+) is required as a cofactor.

The protein resides in the cytoplasm. It carries out the reaction L-seryl-[protein] + ATP = O-phospho-L-seryl-[protein] + ADP + H(+). The enzyme catalyses L-threonyl-[protein] + ATP = O-phospho-L-threonyl-[protein] + ADP + H(+). The catalysed reaction is [DNA-directed RNA polymerase] + ATP = phospho-[DNA-directed RNA polymerase] + ADP + H(+). Phosphorylation at Thr-14 or Tyr-15 inactivates the enzyme, while phosphorylation at Thr-158 activates it. In terms of biological role, serine/threonine-protein kinase. Involved in the control of the cell cycle. Required for entry into S-phase and mitosis. Probable component of the kinase complex that phosphorylates the repetitive C-terminus of RNA polymerase II. The sequence is that of Cyclin-dependent kinase 2 homolog from Theileria parva (East coast fever infection agent).